The sequence spans 704 residues: Elongation factor G (704 aa).

The tr-type G domain occupies 8–290 (ARYRNIGISA…AVIDYLPSPV (283 aa)). GTP is bound by residues 17 to 24 (AHIDAGKT), 88 to 92 (DTPGH), and 142 to 145 (NKMD). N6-acetyllysine is present on residues K504 and K643.

It belongs to the TRAFAC class translation factor GTPase superfamily. Classic translation factor GTPase family. EF-G/EF-2 subfamily.

It is found in the cytoplasm. Its function is as follows. Catalyzes the GTP-dependent ribosomal translocation step during translation elongation. During this step, the ribosome changes from the pre-translocational (PRE) to the post-translocational (POST) state as the newly formed A-site-bound peptidyl-tRNA and P-site-bound deacylated tRNA move to the P and E sites, respectively. Catalyzes the coordinated movement of the two tRNA molecules, the mRNA and conformational changes in the ribosome. The polypeptide is Elongation factor G (Shigella sonnei (strain Ss046)).